The primary structure comprises 79 residues: Small polypeptide DEVIL 8 (79 aa).

A compositionally biased stretch (polar residues) spans 1–12 (MSRLRNSAQLQL). Positions 1-37 (MSRLRNSAQLQLSKKESLGDNGGALNTTRSSRQKQGK) are disordered. Asparagine 26 carries an N-linked (GlcNAc...) asparagine glycan. A required for DVL/RTFL small polypeptide activity region spans residues 39-70 (GFTRKCGRLVKEQRARFYIMRRCVVMLICWTD). A helical membrane pass occupies residues 55 to 71 (FYIMRRCVVMLICWTDH). N-linked (GlcNAc...) asparagine glycosylation occurs at asparagine 74.

Belongs to the DVL/RTFL small polypeptides family.

It localises to the cell membrane. In terms of biological role, small polypeptide acting as a regulatory molecule which coordinates cellular responses required for differentiation, growth and development, probably by restricting polar cell proliferation in lateral organs and coordinating socket cell recruitment and differentiation at trichome sites. The protein is Small polypeptide DEVIL 8 of Arabidopsis thaliana (Mouse-ear cress).